The following is a 594-amino-acid chain: MSGTILENLSGRKLSILVATLLLCQVLCFLLGGLYAPLPAGHVTVLGSLCREDHARQNDTSFLLYSRGAGACIPVTREEVEQDSTKMANELVHVFQMPLPRDLRDLDYSRWQQNLIGVLQVEFGYDSSSELREPPRELQLTIDMRLAYRNKGDPDNGWKLYAHGVEHRYLDCVTSHVGPTETLYSCDMIPLFELGALHHSFYLLNLRFPLDTPSQMNLQFGHMHDLTLTAIHQNGGFTQIWLLLKTMLFPFVVGIMIWFWRRVHLLQRSPALLEYMLIYLGAALTFLNLPLEYLSLVYEMPYMLLLSDIRQGIFYAMLLTFWLVFAGEHMLIQDAPNKSTIRSRYWKHLSAVVVGCISLFVFDICERGVQLRNPFYSIWTTPLGAKVAMTFIVLAGVSAAIYFLFLCYMIWKVFRNIGDKRTSLPSMSQARRLHYEVPLDQKVEDWAGIVYFYTKAFFFQLHKANESKGLIYRFKFLMLATLVCAALTVAGFIMGQMAEGQWDWNDNVAIQPTSAFLTGVYGMWNIYIFALLILYAPSHKQWPTMHHSDETTQSNENIVASAASEEIEFSHLPSDSNPSEISSLTSFTRKVAFD.

Over 1-13 (MSGTILENLSGRK) the chain is Cytoplasmic. A helical transmembrane segment spans residues 14-34 (LSILVATLLLCQVLCFLLGGL). The Lumenal segment spans residues 35 to 239 (YAPLPAGHVT…AIHQNGGFTQ (205 aa)). N-linked (GlcNAc...) asparagine glycosylation is present at Asn58. A helical membrane pass occupies residues 240–260 (IWLLLKTMLFPFVVGIMIWFW). Residues 261–270 (RRVHLLQRSP) are Cytoplasmic-facing. The chain crosses the membrane as a helical span at residues 271 to 291 (ALLEYMLIYLGAALTFLNLPL). The Lumenal segment spans residues 292–311 (EYLSLVYEMPYMLLLSDIRQ). A helical transmembrane segment spans residues 312–332 (GIFYAMLLTFWLVFAGEHMLI). Residues 333–344 (QDAPNKSTIRSR) are Cytoplasmic-facing. A helical transmembrane segment spans residues 345–365 (YWKHLSAVVVGCISLFVFDIC). The Lumenal portion of the chain corresponds to 366-390 (ERGVQLRNPFYSIWTTPLGAKVAMT). Residues 391 to 411 (FIVLAGVSAAIYFLFLCYMIW) traverse the membrane as a helical segment. The Cytoplasmic segment spans residues 412 to 473 (KVFRNIGDKR…ANESKGLIYR (62 aa)). A helical transmembrane segment spans residues 474–494 (FKFLMLATLVCAALTVAGFIM). Topologically, residues 495–514 (GQMAEGQWDWNDNVAIQPTS) are lumenal. A helical transmembrane segment spans residues 515 to 535 (AFLTGVYGMWNIYIFALLILY). The Cytoplasmic segment spans residues 536–594 (APSHKQWPTMHHSDETTQSNENIVASAASEEIEFSHLPSDSNPSEISSLTSFTRKVAFD). Positions 571–594 (HLPSDSNPSEISSLTSFTRKVAFD) are disordered. Over residues 573-588 (PSDSNPSEISSLTSFT) the composition is skewed to polar residues.

This sequence belongs to the wntless family. As to quaternary structure, interacts with wg; in the Golgi. Interacts with Vps35, a component of the retromer complex; wls stability is regulated by Vps35. In terms of tissue distribution, ubiquitously expressed in the wing imaginal disk, increased expression is observed in a stripe at the dorso-ventral boundary and other regions of the wing disk that express wg. Also expresses in the leg imaginal disk. During larval development, expression is seen in both motorneurons and muscle.

It is found in the presynaptic cell membrane. The protein localises to the postsynaptic cell membrane. It localises to the cell membrane. The protein resides in the endosome membrane. Its subcellular location is the endoplasmic reticulum membrane. It is found in the golgi apparatus membrane. In terms of biological role, a segment polarity gene required for wingless (wg)-dependent patterning processes, acting in both wg-sending cells and wg-target cells. In non-neuronal cells wls directs wg secretion. The wls traffic loop encompasses the Golgi, the cell surface, an endocytic compartment and a retrograde route leading back to the Golgi, and involves clathrin-mediated endocytosis and the retromer complex (a conserved protein complex consisting of Vps35 and Vps26). In neuronal cells (the larval motorneuron NMJ), the wg signal moves across the synapse via the release of wls-containing exosome-like vesicles. Postsynaptic wls is required for the trafficking of fz2 through the fz2-interacting protein Grip. This Drosophila melanogaster (Fruit fly) protein is Protein wntless.